The following is a 201-amino-acid chain: 7-methyl-GTP pyrophosphatase (201 aa).

The active-site Proton acceptor is D73.

The protein belongs to the Maf family. YceF subfamily. Requires a divalent metal cation as cofactor.

The protein resides in the cytoplasm. The catalysed reaction is N(7)-methyl-GTP + H2O = N(7)-methyl-GMP + diphosphate + H(+). Its function is as follows. Nucleoside triphosphate pyrophosphatase that hydrolyzes 7-methyl-GTP (m(7)GTP). May have a dual role in cell division arrest and in preventing the incorporation of modified nucleotides into cellular nucleic acids. In Thiobacillus denitrificans (strain ATCC 25259 / T1), this protein is 7-methyl-GTP pyrophosphatase.